The sequence spans 447 residues: Phosphoglucosamine mutase (447 aa).

Serine 104 (phosphoserine intermediate) is an active-site residue. Residues serine 104, aspartate 243, aspartate 245, and aspartate 247 each coordinate Mg(2+). At serine 104 the chain carries Phosphoserine.

It belongs to the phosphohexose mutase family. Requires Mg(2+) as cofactor. Activated by phosphorylation.

It carries out the reaction alpha-D-glucosamine 1-phosphate = D-glucosamine 6-phosphate. Catalyzes the conversion of glucosamine-6-phosphate to glucosamine-1-phosphate. In Corynebacterium glutamicum (strain ATCC 13032 / DSM 20300 / JCM 1318 / BCRC 11384 / CCUG 27702 / LMG 3730 / NBRC 12168 / NCIMB 10025 / NRRL B-2784 / 534), this protein is Phosphoglucosamine mutase.